The following is a 76-amino-acid chain: UPF0346 protein LBA0976 (76 aa).

This sequence belongs to the UPF0346 family.

This chain is UPF0346 protein LBA0976, found in Lactobacillus acidophilus (strain ATCC 700396 / NCK56 / N2 / NCFM).